The sequence spans 392 residues: Quinolinate synthase (392 aa).

The tract at residues 1-23 is disordered; the sequence is MVDLPTTTPPAQPTTGNDEVDAL. Residues histidine 57 and serine 74 each coordinate iminosuccinate. Cysteine 131 contacts [4Fe-4S] cluster. Iminosuccinate-binding positions include 163–165 and serine 184; that span reads YIN. Cysteine 254 is a [4Fe-4S] cluster binding site. Iminosuccinate is bound by residues 280–282 and threonine 297; that span reads HPE. Cysteine 344 contributes to the [4Fe-4S] cluster binding site.

It belongs to the quinolinate synthase family. Type 3 subfamily. It depends on [4Fe-4S] cluster as a cofactor.

It is found in the cytoplasm. It catalyses the reaction iminosuccinate + dihydroxyacetone phosphate = quinolinate + phosphate + 2 H2O + H(+). Its pathway is cofactor biosynthesis; NAD(+) biosynthesis; quinolinate from iminoaspartate: step 1/1. Catalyzes the condensation of iminoaspartate with dihydroxyacetone phosphate to form quinolinate. This is Quinolinate synthase from Rhodopirellula baltica (strain DSM 10527 / NCIMB 13988 / SH1).